The following is a 59-amino-acid chain: Sec-independent protein translocase protein TatA (59 aa).

The helical transmembrane segment at 1 to 21 (MFSNIGFPGLILILVAVLILF) threads the bilayer.

Belongs to the TatA/E family. Forms a complex with TatC.

The protein resides in the cell membrane. Its function is as follows. Part of the twin-arginine translocation (Tat) system that transports large folded proteins containing a characteristic twin-arginine motif in their signal peptide across membranes. TatA could form the protein-conducting channel of the Tat system. This is Sec-independent protein translocase protein TatA from Bacillus mycoides (strain KBAB4) (Bacillus weihenstephanensis).